We begin with the raw amino-acid sequence, 133 residues long: Profilin-4 (133 aa).

C13 and C117 are disulfide-bonded. An Involved in PIP2 interaction motif is present at residues A83–T99. Residue T113 is modified to Phosphothreonine.

Belongs to the profilin family. In terms of assembly, occurs in many kinds of cells as a complex with monomeric actin in a 1:1 ratio. Post-translationally, phosphorylated by MAP kinases.

It is found in the cytoplasm. The protein localises to the cytoskeleton. Its function is as follows. Binds to actin and affects the structure of the cytoskeleton. At high concentrations, profilin prevents the polymerization of actin, whereas it enhances it at low concentrations. In Corylus avellana (European hazel), this protein is Profilin-4.